Here is a 77-residue protein sequence, read N- to C-terminus: Immune protein Tsi2 (77 aa).

In terms of assembly, forms a heterotetramer with Tse2 consisting of two Tse2 dimers and two Tsi2 dimers. Formation of the complex inactivates Tse2 enzymatic activity.

In terms of biological role, immunity protein that plays a role in preventing early activation of toxin Tse2. Binds to a large surface of Tse2 and thereby occludes the active site to specifically inhibits Tse2. The chain is Immune protein Tsi2 from Pseudomonas aeruginosa (strain ATCC 15692 / DSM 22644 / CIP 104116 / JCM 14847 / LMG 12228 / 1C / PRS 101 / PAO1).